A 339-amino-acid polypeptide reads, in one-letter code: Heat-inducible transcription repressor HrcA (339 aa).

It belongs to the HrcA family.

Its function is as follows. Negative regulator of class I heat shock genes (grpE-dnaK-dnaJ and groELS operons). Prevents heat-shock induction of these operons. The polypeptide is Heat-inducible transcription repressor HrcA (Leifsonia xyli subsp. xyli (strain CTCB07)).